A 156-amino-acid chain; its full sequence is Protein archease-like (156 aa).

Residues aspartate 25, aspartate 155, and isoleucine 156 each coordinate Ca(2+).

It belongs to the archease family.

Functionally, component of the tRNA-splicing ligase complex required to facilitate the enzymatic turnover of catalytic subunit RtcB. Plays an important role in a RNA repair and splicing pathway which controls axon regeneration in response to peripheral (PNS) and central nervous system (CNS) injury, by activating splicing of Xbp1 to promote axon regeneration in response to axotomy. The polypeptide is Protein archease-like (Drosophila melanogaster (Fruit fly)).